We begin with the raw amino-acid sequence, 202 residues long: Imidazoleglycerol-phosphate dehydratase (202 aa).

This sequence belongs to the imidazoleglycerol-phosphate dehydratase family.

It is found in the cytoplasm. The catalysed reaction is D-erythro-1-(imidazol-4-yl)glycerol 3-phosphate = 3-(imidazol-4-yl)-2-oxopropyl phosphate + H2O. Its pathway is amino-acid biosynthesis; L-histidine biosynthesis; L-histidine from 5-phospho-alpha-D-ribose 1-diphosphate: step 6/9. The protein is Imidazoleglycerol-phosphate dehydratase of Rhizobium etli (strain ATCC 51251 / DSM 11541 / JCM 21823 / NBRC 15573 / CFN 42).